Reading from the N-terminus, the 414-residue chain is Myb1 protein (414 aa).

Myb-like domains are found at residues 242–266 (WNEVSEKLSNNQNAKECQKMWLYYG), 268–320 (FEDD…IKIN), and 328–381 (KVKL…TNLN).

Its subcellular location is the nucleus. In terms of biological role, transcriptional activator. Has a role in the parasite erythrocytic cycle where it directly regulates key genes involved in cell cycle regulation and progression. Binds directly to Myb regulatory elements. This chain is Myb1 protein, found in Plasmodium falciparum (isolate 3D7).